The primary structure comprises 68 residues: Large ribosomal subunit protein bL28 (68 aa).

Residues 1-30 (MAKICDHCGKKPQSGNNVSHANNKSKRRFE) are disordered. Residues 13–22 (QSGNNVSHAN) are compositionally biased toward polar residues.

It belongs to the bacterial ribosomal protein bL28 family.

This is Large ribosomal subunit protein bL28 from Solidesulfovibrio magneticus (strain ATCC 700980 / DSM 13731 / RS-1) (Desulfovibrio magneticus).